A 110-amino-acid polypeptide reads, in one-letter code: Flagellar hook-basal body complex protein FliE (110 aa).

Belongs to the FliE family.

It is found in the bacterial flagellum basal body. This is Flagellar hook-basal body complex protein FliE from Ralstonia nicotianae (strain ATCC BAA-1114 / GMI1000) (Ralstonia solanacearum).